A 567-amino-acid chain; its full sequence is Proline--tRNA ligase (567 aa).

Belongs to the class-II aminoacyl-tRNA synthetase family. ProS type 1 subfamily. Homodimer.

It is found in the cytoplasm. The enzyme catalyses tRNA(Pro) + L-proline + ATP = L-prolyl-tRNA(Pro) + AMP + diphosphate. Its function is as follows. Catalyzes the attachment of proline to tRNA(Pro) in a two-step reaction: proline is first activated by ATP to form Pro-AMP and then transferred to the acceptor end of tRNA(Pro). As ProRS can inadvertently accommodate and process non-cognate amino acids such as alanine and cysteine, to avoid such errors it has two additional distinct editing activities against alanine. One activity is designated as 'pretransfer' editing and involves the tRNA(Pro)-independent hydrolysis of activated Ala-AMP. The other activity is designated 'posttransfer' editing and involves deacylation of mischarged Ala-tRNA(Pro). The misacylated Cys-tRNA(Pro) is not edited by ProRS. The chain is Proline--tRNA ligase from Geobacillus sp. (strain WCH70).